The sequence spans 396 residues: Elongation factor Tu (396 aa).

The tr-type G domain maps to 10 to 206; sequence KPHVNVGTIG…ALDSFIPEPT (197 aa). Positions 19-26 are G1; it reads GHVDHGKT. Position 19 to 26 (19 to 26) interacts with GTP; it reads GHVDHGKT. Mg(2+) is bound at residue Thr-26. A G2 region spans residues 60–64; the sequence is GITIS. Positions 81-84 are G3; that stretch reads DCPG. GTP-binding positions include 81-85 and 136-139; these read DCPGH and NKAD. The tract at residues 136-139 is G4; it reads NKAD. A G5 region spans residues 174–176; that stretch reads SAR.

The protein belongs to the TRAFAC class translation factor GTPase superfamily. Classic translation factor GTPase family. EF-Tu/EF-1A subfamily. As to quaternary structure, monomer.

Its subcellular location is the cytoplasm. It catalyses the reaction GTP + H2O = GDP + phosphate + H(+). Its function is as follows. GTP hydrolase that promotes the GTP-dependent binding of aminoacyl-tRNA to the A-site of ribosomes during protein biosynthesis. This chain is Elongation factor Tu, found in Xanthomonas euvesicatoria pv. vesicatoria (strain 85-10) (Xanthomonas campestris pv. vesicatoria).